Here is a 422-residue protein sequence, read N- to C-terminus: Probable biofilm formation methyltransferase WspC (422 aa).

In terms of domain architecture, CheR-type methyltransferase spans 1-264 (MNDRFERLLK…LSFVFRRTSE (264 aa)). S-adenosyl-L-methionine contacts are provided by residues T67, R71, E108, D132, 186-187 (NL), and 205-206 (RN). The interval 289–316 (ASIRPSPPPPAKPRQRLSSLVPPASGQP) is disordered. A TPR repeat occupies 354 to 387 (ATVFYWLGLLSDVAGQEQEAQDFYRKALYLEPQH).

Monomer.

Its function is as follows. Involved in biofilm formation. This chain is Probable biofilm formation methyltransferase WspC (wspC), found in Pseudomonas aeruginosa (strain ATCC 15692 / DSM 22644 / CIP 104116 / JCM 14847 / LMG 12228 / 1C / PRS 101 / PAO1).